Consider the following 467-residue polypeptide: Sialic acid-binding Ig-like lectin 7 (467 aa).

The signal sequence occupies residues 1 to 18 (MLLLLLLPLLWGRERVEG). At 19–353 (QKSNRKDYSL…KMRPVSGVLL (335 aa)) the chain is on the extracellular side. Positions 39-122 (GMCVHVRCSF…ARMSDAGRYF (84 aa)) constitute an Ig-like V-type domain. A disulfide bridge links C46 with C106. N105 is a glycosylation site (N-linked (GlcNAc...) asparagine). Residues R124 and 131 to 135 (KWNYK) each bind N-acetylneuraminate. N-linked (GlcNAc...) asparagine glycosylation is found at N142 and N165. The Ig-like C2-type 1 domain maps to 150 to 233 (PNILIPGTLE…AGVTTNRTIQ (84 aa)). A disulfide bridge links C168 with C217. 4 N-linked (GlcNAc...) asparagine glycosylation sites follow: N229, N235, N242, and N260. Positions 240–336 (PQNLTVTVFQ…GSQHVSLNLS (97 aa)) constitute an Ig-like C2-type 2 domain. A disulfide bridge connects residues C276 and C320. N334 carries an N-linked (GlcNAc...) asparagine glycan. Residues 354–376 (GAVGGAGATALVFLSFCVIFIVV) form a helical membrane-spanning segment. At 377–467 (RSCRKKSARP…NEYSEIKIPK (91 aa)) the chain is on the cytoplasmic side. The span at 401 to 412 (IRGSASQGNLTE) shows a compositional bias: polar residues. The segment at 401 to 431 (IRGSASQGNLTESWADDNPRHHGLAAHSSGE) is disordered. S429 bears the Phosphoserine mark. The ITIM motif motif lies at 435–440 (IQYAPL). Residues 443 to 467 (HKGEPQDLSGQEATNNEYSEIKIPK) are disordered. The span at 450–460 (LSGQEATNNEY) shows a compositional bias: polar residues.

Belongs to the immunoglobulin superfamily. SIGLEC (sialic acid binding Ig-like lectin) family. Interacts with PTPN6/SHP-1 upon phosphorylation. Post-translationally, tyrosine phosphorylated. As to expression, predominantly expressed by resting and activated natural killer cells and at lower levels by granulocytes and monocytes. High expression found in placenta, liver, lung, spleen, and peripheral blood leukocytes.

It localises to the membrane. Its function is as follows. Putative adhesion molecule that mediates sialic-acid dependent binding to cells. Preferentially binds to alpha-2,3- and alpha-2,6-linked sialic acid. Also binds disialogangliosides (disialogalactosyl globoside, disialyl lactotetraosylceramide and disialyl GalNAc lactotetraoslylceramide). The sialic acid recognition site may be masked by cis interactions with sialic acids on the same cell surface. In the immune response, may act as an inhibitory receptor upon ligand induced tyrosine phosphorylation by recruiting cytoplasmic phosphatase(s) via their SH2 domain(s) that block signal transduction through dephosphorylation of signaling molecules. Mediates inhibition of natural killer cells cytotoxicity. May play a role in hemopoiesis. Inhibits differentiation of CD34+ cell precursors towards myelomonocytic cell lineage and proliferation of leukemic myeloid cells (in vitro). The chain is Sialic acid-binding Ig-like lectin 7 (SIGLEC7) from Homo sapiens (Human).